Here is a 179-residue protein sequence, read N- to C-terminus: Large ribosomal subunit protein uL5 (179 aa).

The protein belongs to the universal ribosomal protein uL5 family. Part of the 50S ribosomal subunit; part of the 5S rRNA/L5/L18/L25 subcomplex. Contacts the 5S rRNA and the P site tRNA. Forms a bridge to the 30S subunit in the 70S ribosome.

Its function is as follows. This is one of the proteins that bind and probably mediate the attachment of the 5S RNA into the large ribosomal subunit, where it forms part of the central protuberance. In the 70S ribosome it contacts protein S13 of the 30S subunit (bridge B1b), connecting the 2 subunits; this bridge is implicated in subunit movement. Contacts the P site tRNA; the 5S rRNA and some of its associated proteins might help stabilize positioning of ribosome-bound tRNAs. The chain is Large ribosomal subunit protein uL5 from Pectobacterium atrosepticum (strain SCRI 1043 / ATCC BAA-672) (Erwinia carotovora subsp. atroseptica).